Here is a 222-residue protein sequence, read N- to C-terminus: 2-hydroxypent-2,4-dienoate hydratase (222 aa).

The protein belongs to the hydratase/decarboxylase family.

The protein operates within aromatic compound metabolism; benzoate degradation via hydroxylation. Its function is as follows. Conversion of 2-hydroxypent-2,4-dienoate into 4-hydroxy-2-oxopentanoate. In Pseudomonas putida (Arthrobacter siderocapsulatus), this protein is 2-hydroxypent-2,4-dienoate hydratase (xylJ).